The sequence spans 98 residues: Cytochrome c2 (98 aa).

Position 1 is a pyrrolidone carboxylic acid (Gln-1). Positions 10, 13, 14, and 76 each coordinate heme c.

The protein belongs to the cytochrome c family. Binds 1 heme c group covalently per subunit.

It is found in the periplasm. Functionally, cytochrome c2 is found mainly in purple, non-sulfur, photosynthetic bacteria where it functions as the electron donor to the oxidized bacteriochlorophyll in the photophosphorylation pathway. However, it may also have a role in the respiratory chain and is found in some non-photosynthetic bacteria. The protein is Cytochrome c2 of Rhodoplanes tepidamans (Rhodoplanes cryptolactis).